A 70-amino-acid polypeptide reads, in one-letter code: Large ribosomal subunit protein uL29 (70 aa).

Belongs to the universal ribosomal protein uL29 family.

This Methanocaldococcus jannaschii (strain ATCC 43067 / DSM 2661 / JAL-1 / JCM 10045 / NBRC 100440) (Methanococcus jannaschii) protein is Large ribosomal subunit protein uL29 (rpl29).